Here is a 1856-residue protein sequence, read N- to C-terminus: Protein TANC1 (1856 aa).

Methionine 1 is subject to N-acetylmethionine. Disordered regions lie at residues 1-45 (MLKA…LSTT), 58-130 (SMSL…SCSP), 203-222 (KSPC…KDSG), 262-296 (RADN…PVPY), and 437-489 (IASS…RPRE). Basic and acidic residues predominate over residues 8–21 (KSREGGKGSKKEAG). A compositionally biased stretch (polar residues) spans 29–45 (PALSSSGDSPVNSLSTT). Serine 60, serine 63, serine 64, serine 204, serine 267, and serine 462 each carry phosphoserine. A compositionally biased stretch (low complexity) spans 60–77 (SLPSSPLLPRQSLLTQSR). Over residues 203-216 (KSPCETISSPSSTL) the composition is skewed to polar residues. Over residues 439–475 (SSSPSLSPKSSDPTQDLPGTPLLSPSSSTSALSVTRT) the composition is skewed to low complexity. ANK repeat units follow at residues 893 to 925 (EGLS…NVNY), 931 to 960 (NNAP…CLDG), 964 to 993 (NGMN…RVDH), 997 to 1026 (KGQC…SAGP), 1037 to 1066 (ALQQ…EHEI), 1075 to 1104 (WGET…AVSR), 1108 to 1137 (RGVP…DVNL), 1141 to 1170 (QGRT…ALSS), 1174 to 1203 (EGLS…EIDQ), 1207 to 1236 (NGRT…VIEH), and 1240 to 1269 (SGMR…KLGN). 3 TPR repeats span residues 1286–1319 (LQKL…FPRE), 1333–1366 (VSLY…KPKS), and 1368–1400 (EAFY…CPNN). Over residues 1417–1426 (LQRNQQQKQQ) the composition is skewed to low complexity. Disordered stretches follow at residues 1417–1597 (LQRN…FGDR), 1636–1720 (DMAP…NTPF), and 1832–1856 (HVST…ESNV). Serine 1436 and serine 1463 each carry phosphoserine. The span at 1454–1463 (EEAEEEDTSS) shows a compositional bias: acidic residues. 2 stretches are compositionally biased toward polar residues: residues 1490-1505 (EGLQ…QSRA) and 1524-1556 (PTKQ…VSSQ). Residues 1656–1686 (SLSSSGSSGSPSSSIKMSSSTSSLTSSSSVS) are compositionally biased toward low complexity. 3 positions are modified to phosphoserine: serine 1665, serine 1673, and serine 1674.

It belongs to the TANC family. As to quaternary structure, interacts probably directly with DLG1, DLG4, HOMER1. Interacts with DLGAP1, INA, CAMK2A, GRIN2B and GRIA1. Interacts with TNIK and MINK1. Post-translationally, phosphorylated; by MINK1 and TNIK upon stimulation by RAP2A.

It localises to the postsynaptic density. May be a scaffold component in the postsynaptic density. This chain is Protein TANC1 (Tanc1), found in Mus musculus (Mouse).